The chain runs to 190 residues: Probable nicotinate-nucleotide adenylyltransferase (190 aa).

The protein belongs to the NadD family.

It carries out the reaction nicotinate beta-D-ribonucleotide + ATP + H(+) = deamido-NAD(+) + diphosphate. It participates in cofactor biosynthesis; NAD(+) biosynthesis; deamido-NAD(+) from nicotinate D-ribonucleotide: step 1/1. Catalyzes the reversible adenylation of nicotinate mononucleotide (NaMN) to nicotinic acid adenine dinucleotide (NaAD). The polypeptide is Probable nicotinate-nucleotide adenylyltransferase (Borrelia hermsii (strain HS1 / DAH)).